A 508-amino-acid chain; its full sequence is Photosystem II CP47 reaction center protein (508 aa).

The next 6 membrane-spanning stretches (helical) occupy residues 21-36 (AVHIMHTALVAGWAGS), 101-115 (IVFSGLCFLSAIWHW), 140-156 (GIHLFLSGVACFGFGAF), 203-218 (IAAGLLGIIAGLFHLS), 237-252 (VLSSSIAAVFFAAFIV), and 457-472 (TFALLFFFGHIWHGAR).

Belongs to the PsbB/PsbC family. PsbB subfamily. As to quaternary structure, PSII is composed of 1 copy each of membrane proteins PsbA, PsbB, PsbC, PsbD, PsbE, PsbF, PsbH, PsbI, PsbJ, PsbK, PsbL, PsbM, PsbT, PsbX, PsbY, PsbZ, Psb30/Ycf12, at least 3 peripheral proteins of the oxygen-evolving complex and a large number of cofactors. It forms dimeric complexes. The cofactor is Binds multiple chlorophylls. PSII binds additional chlorophylls, carotenoids and specific lipids..

Its subcellular location is the plastid. The protein localises to the chloroplast thylakoid membrane. In terms of biological role, one of the components of the core complex of photosystem II (PSII). It binds chlorophyll and helps catalyze the primary light-induced photochemical processes of PSII. PSII is a light-driven water:plastoquinone oxidoreductase, using light energy to abstract electrons from H(2)O, generating O(2) and a proton gradient subsequently used for ATP formation. The polypeptide is Photosystem II CP47 reaction center protein (Gnetum parvifolium (Small-leaved jointfir)).